The sequence spans 346 residues: Cytosolic sulfotransferase 17 (346 aa).

Position 89-94 (89-94 (KTGTTW)) interacts with 3'-phosphoadenylyl sulfate. H151 functions as the Proton acceptor in the catalytic mechanism. 3'-phosphoadenylyl sulfate contacts are provided by residues R173, S181, Y239, and 309 to 311 (RKG).

This sequence belongs to the sulfotransferase 1 family. As to expression, highly expressed in roots, stems and mature leaves. Low expression in young leaves and flowers. Barely detected in siliques.

The protein resides in the cytoplasm. The catalysed reaction is an aliphatic (Z)-desulfo-glucosinolate + 3'-phosphoadenylyl sulfate = a (Z)-omega-(methylsulfanyl)-N-sulfo-alkylhydroximate S-glucoside + adenosine 3',5'-bisphosphate + H(+). Its activity is regulated as follows. Inhibited by phosphoadenosine 5'-phosphate (PAP). Sulfotransferase that utilizes 3'-phospho-5'-adenylyl sulfate (PAPS) as sulfonate donor to catalyze the sulfate conjugation of desulfo-glucosinolates (dsGSs), the final step in the biosynthesis of the glucosinolate core structure. Substrate preference is desulfo-benzyl glucosinolate &gt; desulfo-6-methylthiohexyl glucosinolate. Increased specific activity with increasing chain length of desulfo-glucosinolate derived from methionine. Preferred substrate is desulfo-8-methylthiooctyl glucosinolate. The chain is Cytosolic sulfotransferase 17 (SOT17) from Arabidopsis thaliana (Mouse-ear cress).